Here is a 207-residue protein sequence, read N- to C-terminus: Transcriptional regulatory protein RcsA (207 aa).

Positions 131–196 (LTLPTLSLSK…VIYHIVRLTE (66 aa)) constitute an HTH luxR-type domain. Residues 155–174 (TSQISTQMNIKAKTVSSHKG) constitute a DNA-binding region (H-T-H motif).

Belongs to the RcsA family.

Its function is as follows. Component of the Rcs signaling system, which controls transcription of numerous genes. Binds to DNA to regulate expression of genes. The sequence is that of Transcriptional regulatory protein RcsA from Klebsiella aerogenes (Enterobacter aerogenes).